The sequence spans 583 residues: Leucine-rich repeat-containing protein 47 (583 aa).

At alanine 2 the chain carries N-acetylalanine. 7 LRR repeats span residues 76–95, 100–121, 130–152, 154–175, 180–202, 203–225, and 226–246; these read QLHSLVLRRNALGPGLSPEL, ALRVLDLSGNALEALPPGQGLG, QLQSLNLSGNRLRELPADLARCA, RLQSLNLTGNCLDSFPAELFRP, LLSELAAADNCLRELSPDIAHLA, SLKTLDLSNNQLSEIPAELADCP, and KLKEINFRGNKLRDKRLEKMV. The interval 260-300 is disordered; the sequence is VGGRGGGKGKGRAEGSEKEESRRKRRERKQRREGGDGEEQD. The segment covering 270-281 has biased composition (basic and acidic residues); it reads GRAEGSEKEESR. 2 positions are modified to phosphoserine: serine 315 and serine 431. Residues 402–437 are a coiled coil; the sequence is LGRKEAKAKELVRQLQLEAEEQRKQKKRQSVSGLHR. A Phosphotyrosine modification is found at tyrosine 509. Residues 513-544 form a disordered region; that stretch reads NKEEGSLSDTEADAVSGQLPDPTTNPSAGKDG. Residues serine 518 and serine 520 each carry the phosphoserine modification.

This is Leucine-rich repeat-containing protein 47 (LRRC47) from Homo sapiens (Human).